Here is a 353-residue protein sequence, read N- to C-terminus: MMKKISKVVLAVGGTGGHIIPALAARETFIKEKVEVLLLGKGLTRFLEGEPDVLYYDIPSGSPFSLRPNQMFSGARQLYQGYTAALRMIKSFAPDVAVGFGSYHSLPAILASIRKRIPLFLHEQNVVPGKVNKLFSHFAKGVGMSFSAAGEHFRCRAEEVFLPIREPSEQIVFPEASPVICVVGGSQGAKILNDCVPKALAYVREKHANLYVHHIVGPKGDLEGVSRVYQDAGIQHKVTFFEKNILGVLQASDLVIGRAGATILNELLWVQVPAILIPYPGAHGHQEANAKFFTQTLGGGTMILQKHLTEESLRKQVLLALDPATSENRRKAMLDAQKNKSFKSLYQFICESL.

Residues T15–G17, N125, R165, S186, and Q286 each bind UDP-N-acetyl-alpha-D-glucosamine.

Belongs to the glycosyltransferase 28 family. MurG subfamily.

The protein resides in the cell inner membrane. It carries out the reaction di-trans,octa-cis-undecaprenyl diphospho-N-acetyl-alpha-D-muramoyl-L-alanyl-D-glutamyl-meso-2,6-diaminopimeloyl-D-alanyl-D-alanine + UDP-N-acetyl-alpha-D-glucosamine = di-trans,octa-cis-undecaprenyl diphospho-[N-acetyl-alpha-D-glucosaminyl-(1-&gt;4)]-N-acetyl-alpha-D-muramoyl-L-alanyl-D-glutamyl-meso-2,6-diaminopimeloyl-D-alanyl-D-alanine + UDP + H(+). It functions in the pathway cell wall biogenesis; peptidoglycan biosynthesis. Its function is as follows. Cell wall formation. Catalyzes the transfer of a GlcNAc subunit on undecaprenyl-pyrophosphoryl-MurNAc-pentapeptide (lipid intermediate I) to form undecaprenyl-pyrophosphoryl-MurNAc-(pentapeptide)GlcNAc (lipid intermediate II). The polypeptide is UDP-N-acetylglucosamine--N-acetylmuramyl-(pentapeptide) pyrophosphoryl-undecaprenol N-acetylglucosamine transferase (Chlamydia muridarum (strain MoPn / Nigg)).